A 751-amino-acid polypeptide reads, in one-letter code: Putative tyrosine-protein kinase EpsB (751 aa).

At 1 to 31 the chain is on the cytoplasmic side; the sequence is MTQNLSQPPAVNAPESELDLVRYLDVLVANR. Residues 32 to 52 traverse the membrane as a helical segment; sequence WLIAGIAAVVMLLGATYAFLA. Residues 53-444 lie on the Periplasmic side of the membrane; sequence RPVYEADVLV…VPEEPVKPKK (392 aa). A helical membrane pass occupies residues 445–465; the sequence is LTVTALAGVLGVVLGVVAAFV. Residues 466 to 751 lie on the Cytoplasmic side of the membrane; sequence RNTLFGGITE…PSAEAEAESA (286 aa).

It belongs to the etk/wzc family.

The protein resides in the cell inner membrane. It catalyses the reaction L-tyrosyl-[protein] + ATP = O-phospho-L-tyrosyl-[protein] + ADP + H(+). In terms of biological role, probably involved in polymerization and/or export of exopolysaccharide EPS I which functions as a virulence factor. May be involved in an ATP-dependent process in the pathway for EPS I production, possibly export of the trimeric repeat units across the inner membrane or their polymerization. The sequence is that of Putative tyrosine-protein kinase EpsB (epsB) from Ralstonia nicotianae (strain ATCC BAA-1114 / GMI1000) (Ralstonia solanacearum).